The primary structure comprises 798 residues: Phenylalanine--tRNA ligase beta subunit (798 aa).

Residues Ser-39 to Leu-148 enclose the tRNA-binding domain. In terms of domain architecture, B5 spans Asp-401–Ala-476. Residues Asp-454, Asp-460, Glu-463, and Glu-464 each coordinate Mg(2+). One can recognise an FDX-ACB domain in the interval Ser-704–Arg-797.

Belongs to the phenylalanyl-tRNA synthetase beta subunit family. Type 1 subfamily. Tetramer of two alpha and two beta subunits. It depends on Mg(2+) as a cofactor.

The protein resides in the cytoplasm. The catalysed reaction is tRNA(Phe) + L-phenylalanine + ATP = L-phenylalanyl-tRNA(Phe) + AMP + diphosphate + H(+). In Paramagnetospirillum magneticum (strain ATCC 700264 / AMB-1) (Magnetospirillum magneticum), this protein is Phenylalanine--tRNA ligase beta subunit.